Reading from the N-terminus, the 618-residue chain is Dihydroxy-acid dehydratase (618 aa).

Residue Asp81 coordinates Mg(2+). Cys122 provides a ligand contact to [2Fe-2S] cluster. Asp123 and Lys124 together coordinate Mg(2+). N6-carboxylysine is present on Lys124. Cys195 is a [2Fe-2S] cluster binding site. Glu491 provides a ligand contact to Mg(2+). Ser517 acts as the Proton acceptor in catalysis.

Belongs to the IlvD/Edd family. As to quaternary structure, homodimer. The cofactor is [2Fe-2S] cluster. It depends on Mg(2+) as a cofactor.

It catalyses the reaction (2R)-2,3-dihydroxy-3-methylbutanoate = 3-methyl-2-oxobutanoate + H2O. The catalysed reaction is (2R,3R)-2,3-dihydroxy-3-methylpentanoate = (S)-3-methyl-2-oxopentanoate + H2O. It participates in amino-acid biosynthesis; L-isoleucine biosynthesis; L-isoleucine from 2-oxobutanoate: step 3/4. It functions in the pathway amino-acid biosynthesis; L-valine biosynthesis; L-valine from pyruvate: step 3/4. Its function is as follows. Functions in the biosynthesis of branched-chain amino acids. Catalyzes the dehydration of (2R,3R)-2,3-dihydroxy-3-methylpentanoate (2,3-dihydroxy-3-methylvalerate) into 2-oxo-3-methylpentanoate (2-oxo-3-methylvalerate) and of (2R)-2,3-dihydroxy-3-methylbutanoate (2,3-dihydroxyisovalerate) into 2-oxo-3-methylbutanoate (2-oxoisovalerate), the penultimate precursor to L-isoleucine and L-valine, respectively. In Rhodopseudomonas palustris (strain ATCC BAA-98 / CGA009), this protein is Dihydroxy-acid dehydratase.